The chain runs to 703 residues: Fanconi-associated nuclease 1 homolog (703 aa).

The Mn(2+) site is built by Glu529, Asp651, Glu666, and Val667. In terms of domain architecture, VRR-NUC spans 597 to 698; the sequence is YIREHQRKTF…EVDVEVCHVS (102 aa).

The protein belongs to the FAN1 family. It depends on Mn(2+) as a cofactor. Mg(2+) serves as cofactor.

Its subcellular location is the nucleus. The enzyme catalyses Hydrolytically removes 5'-nucleotides successively from the 3'-hydroxy termini of 3'-hydroxy-terminated oligonucleotides.. Its function is as follows. Nuclease required for the repair of DNA interstrand cross-links (ICL). Acts as a 5'-3' exonuclease that anchors at a cut end of DNA and cleaves DNA successively at every third nucleotide, allowing to excise an ICL from one strand through flanking incisions. This is Fanconi-associated nuclease 1 homolog from Schizosaccharomyces pombe (strain 972 / ATCC 24843) (Fission yeast).